The following is a 655-amino-acid chain: MGIFSIANQHIRFAVKLATAIVLALFVGFHFQLETPRWAVLTAAIVAAGPAFAAGGEPYSGAIRYRGFLRIIGTFIGCIAGLVIIIAMIRAPLLMILVCCIWAGFCTWISSLVRIENSYAWGLAGYTALIIVITIQPEPLLTPQFAVERCSEIVIGIVCAIMADLLFSPRSIKQEVDRELESLLVAQYQLMQLCIKHGDGEVVDKAWGDLVRRTTALQGMRSNLNMESSRWARANRRLKAINTLSLTLITQSCETYLIQNTRPELITDTFREFFDTPVETAQDVHKQLKRLRRVIAWTGERETPVTIYSWVAAATRYQLLKRGVISNTKINATEEEILQGEPEVKVESAERHHAMVNFWRTTLSCILGTLFWLWTGWTSGSGAMVMIAVVTSLAMRLPNPRMVAIDFIYGTLAALPLGLLYFLVIIPNTQQSMLLLCISLAVLGFFLGIEVQKRRLGSMGALASTINIIVLDNPMTFHFSQFLDSALGQIVGCVLAFTVILLVRDKSRDRTGRVLLNQFVSAAVSAMTTNVARRKENHLPALYQQLFLLMNKFPGDLPKFRLALTMIIAHQRLRDAPIPVNEDLSAFHRQMRRTADHVISARSDDKRRRYFGQLLEELEIDQEKLRIWQAPPQVTEPVHRLTGMLHKYQHALTDS.

At 1-12 (MGIFSIANQHIR) the chain is on the periplasmic side. Residues 13–33 (FAVKLATAIVLALFVGFHFQL) form a helical membrane-spanning segment. At 34–37 (ETPR) the chain is on the cytoplasmic side. A helical membrane pass occupies residues 38-58 (WAVLTAAIVAAGPAFAAGGEP). The Periplasmic segment spans residues 59–68 (YSGAIRYRGF). A helical transmembrane segment spans residues 69 to 89 (LRIIGTFIGCIAGLVIIIAMI). The Cytoplasmic portion of the chain corresponds to 90–92 (RAP). A helical transmembrane segment spans residues 93–113 (LLMILVCCIWAGFCTWISSLV). Residues 114–120 (RIENSYA) lie on the Periplasmic side of the membrane. The chain crosses the membrane as a helical span at residues 121-141 (WGLAGYTALIIVITIQPEPLL). At 142 to 151 (TPQFAVERCS) the chain is on the cytoplasmic side. Residues 152–172 (EIVIGIVCAIMADLLFSPRSI) traverse the membrane as a helical segment. The Periplasmic portion of the chain corresponds to 173 to 369 (KQEVDRELES…RTTLSCILGT (197 aa)). A helical membrane pass occupies residues 370–390 (LFWLWTGWTSGSGAMVMIAVV). Topologically, residues 391–406 (TSLAMRLPNPRMVAID) are cytoplasmic. Residues 407–427 (FIYGTLAALPLGLLYFLVIIP) form a helical membrane-spanning segment. The Periplasmic portion of the chain corresponds to 428–430 (NTQ). Residues 431-451 (QSMLLLCISLAVLGFFLGIEV) traverse the membrane as a helical segment. Over 452–458 (QKRRLGS) the chain is Cytoplasmic. Residues 459–479 (MGALASTINIIVLDNPMTFHF) traverse the membrane as a helical segment. At 480-481 (SQ) the chain is on the periplasmic side. A helical membrane pass occupies residues 482-502 (FLDSALGQIVGCVLAFTVILL). The Cytoplasmic portion of the chain corresponds to 503–655 (VRDKSRDRTG…HKYQHALTDS (153 aa)).

The protein belongs to the aromatic acid exporter ArAE (TC 2.A.85) family.

It is found in the cell inner membrane. Forms an efflux pump with AaeA. Could function as a metabolic relief valve, allowing to eliminate certain compounds when they accumulate to high levels in the cell. This chain is p-hydroxybenzoic acid efflux pump subunit AaeB, found in Escherichia coli O6:H1 (strain CFT073 / ATCC 700928 / UPEC).